A 308-amino-acid polypeptide reads, in one-letter code: Ribosomal RNA small subunit methyltransferase H (308 aa).

Residues 32-34 (GGH), D52, F78, D100, and Q107 contribute to the S-adenosyl-L-methionine site.

The protein belongs to the methyltransferase superfamily. RsmH family.

The protein resides in the cytoplasm. The enzyme catalyses cytidine(1402) in 16S rRNA + S-adenosyl-L-methionine = N(4)-methylcytidine(1402) in 16S rRNA + S-adenosyl-L-homocysteine + H(+). Its function is as follows. Specifically methylates the N4 position of cytidine in position 1402 (C1402) of 16S rRNA. This Legionella pneumophila (strain Paris) protein is Ribosomal RNA small subunit methyltransferase H.